Consider the following 144-residue polypeptide: Universal stress protein A (144 aa).

Belongs to the universal stress protein A family. In terms of assembly, homodimer.

The protein localises to the cytoplasm. Functionally, required for resistance to DNA-damaging agents. This chain is Universal stress protein A (uspA), found in Escherichia coli O6:H1 (strain CFT073 / ATCC 700928 / UPEC).